Reading from the N-terminus, the 132-residue chain is Protein NrdI (132 aa).

The protein belongs to the NrdI family.

In terms of biological role, probably involved in ribonucleotide reductase function. The polypeptide is Protein NrdI (Agrobacterium fabrum (strain C58 / ATCC 33970) (Agrobacterium tumefaciens (strain C58))).